The following is a 103-amino-acid chain: Cytochrome c-552 (103 aa).

The N-terminal stretch at 1–22 (MKTAWLGTFAASALLVAGYAQA) is a signal peptide. Cys32, Cys35, His36, and Met81 together coordinate heme c.

In terms of assembly, monomer. In terms of processing, binds 1 heme c group covalently per subunit.

Its subcellular location is the periplasm. Monoheme c-type cytochrome. Probable electron donor to membrane cytochrome oxidase and to periplasmic nitrite reductase. This is Cytochrome c-552 (cyt) from Nitrosomonas europaea (strain ATCC 19718 / CIP 103999 / KCTC 2705 / NBRC 14298).